Reading from the N-terminus, the 223-residue chain is DnaJ homolog subfamily B member 9 (223 aa).

The signal sequence occupies residues 1–23 (MATPQSIFIFAICILMITELILA). The J domain maps to 26–90 (SYYDILGVPK…NRRKEYDTLG (65 aa)). Residues 91-223 (HSAFTNGKGQ…VTTYTDCSGQ (133 aa)) form a divergent targeting domain region. Position 133 is a phosphoserine (Ser133).

In terms of assembly, interacts with HSPA5/BiP; interaction is direct. Interacts with ERN1/IRE1 (via the luminal region). Interacts with DERL1.

The protein resides in the endoplasmic reticulum lumen. In terms of biological role, co-chaperone for Hsp70 protein HSPA5/BiP that acts as a key repressor of the ERN1/IRE1-mediated unfolded protein response (UPR). J domain-containing co-chaperones stimulate the ATPase activity of Hsp70 proteins and are required for efficient substrate recognition by Hsp70 proteins. In the unstressed endoplasmic reticulum, interacts with the luminal region of ERN1/IRE1 and selectively recruits HSPA5/BiP: HSPA5/BiP disrupts the dimerization of the active ERN1/IRE1 luminal region, thereby inactivating ERN1/IRE1. Also involved in endoplasmic reticulum-associated degradation (ERAD) of misfolded proteins. Required for survival of B-cell progenitors and normal antibody production. The sequence is that of DnaJ homolog subfamily B member 9 from Pongo abelii (Sumatran orangutan).